The chain runs to 204 residues: Methylthioribulose-1-phosphate dehydratase (204 aa).

Zn(2+)-binding residues include H94 and H96.

The protein belongs to the aldolase class II family. MtnB subfamily. It depends on Zn(2+) as a cofactor.

The catalysed reaction is 5-(methylsulfanyl)-D-ribulose 1-phosphate = 5-methylsulfanyl-2,3-dioxopentyl phosphate + H2O. The protein operates within amino-acid biosynthesis; L-methionine biosynthesis via salvage pathway; L-methionine from S-methyl-5-thio-alpha-D-ribose 1-phosphate: step 2/6. Its function is as follows. Catalyzes the dehydration of methylthioribulose-1-phosphate (MTRu-1-P) into 2,3-diketo-5-methylthiopentyl-1-phosphate (DK-MTP-1-P). The protein is Methylthioribulose-1-phosphate dehydratase of Pseudomonas syringae pv. syringae (strain B728a).